The following is a 486-amino-acid chain: Methionine aminopeptidase 2-2 (486 aa).

A compositionally biased stretch (basic and acidic residues) spans 1–10 (MGSKSPEGHR). The interval 1-120 (MGSKSPEGHR…ALPATELKQT (120 aa)) is disordered. Over residues 46 to 56 (GDDDDDEDAEE) the composition is skewed to acidic residues. The span at 93–108 (KKKKRKKSNKKKKKTK) shows a compositional bias: basic residues. Histidine 238 contributes to the substrate binding site. A divalent metal cation contacts are provided by aspartate 259, aspartate 270, and histidine 339. Histidine 347 is a binding site for substrate. A divalent metal cation contacts are provided by glutamate 372 and glutamate 467.

It belongs to the peptidase M24A family. Methionine aminopeptidase eukaryotic type 2 subfamily. Co(2+) serves as cofactor. Requires Zn(2+) as cofactor. The cofactor is Mn(2+). Fe(2+) is required as a cofactor.

It is found in the cytoplasm. It catalyses the reaction Release of N-terminal amino acids, preferentially methionine, from peptides and arylamides.. Cotranslationally removes the N-terminal methionine from nascent proteins. The N-terminal methionine is often cleaved when the second residue in the primary sequence is small and uncharged (Met-Ala-, Cys, Gly, Pro, Ser, Thr, or Val). This chain is Methionine aminopeptidase 2-2, found in Aspergillus fumigatus (strain ATCC MYA-4609 / CBS 101355 / FGSC A1100 / Af293) (Neosartorya fumigata).